Reading from the N-terminus, the 552-residue chain is uncharacterized protein (552 aa).

Transmembrane regions (helical) follow at residues 127–147 (AIML…ISLL), 160–180 (LIIV…YINI), 393–413 (LTKQ…LSAV), and 517–537 (VIDS…FICI).

The protein localises to the membrane. This is an uncharacterized protein from Saccharomyces cerevisiae (strain ATCC 204508 / S288c) (Baker's yeast).